The chain runs to 322 residues: Tetraacyldisaccharide 4'-kinase (322 aa).

An ATP-binding site is contributed by 54-61 (SVGGTGKT).

The protein belongs to the LpxK family.

The catalysed reaction is a lipid A disaccharide + ATP = a lipid IVA + ADP + H(+). The protein operates within glycolipid biosynthesis; lipid IV(A) biosynthesis; lipid IV(A) from (3R)-3-hydroxytetradecanoyl-[acyl-carrier-protein] and UDP-N-acetyl-alpha-D-glucosamine: step 6/6. Functionally, transfers the gamma-phosphate of ATP to the 4'-position of a tetraacyldisaccharide 1-phosphate intermediate (termed DS-1-P) to form tetraacyldisaccharide 1,4'-bis-phosphate (lipid IVA). The polypeptide is Tetraacyldisaccharide 4'-kinase (Francisella philomiragia subsp. philomiragia (strain ATCC 25017 / CCUG 19701 / FSC 153 / O#319-036)).